Reading from the N-terminus, the 624-residue chain is Chaperone protein HtpG (624 aa).

The a; substrate-binding stretch occupies residues 1 to 336 (MKGQETRGFQ…SNDLPLNVSR (336 aa)). Residues 337–552 (EILQDSTVTR…ADEMSTQMAK (216 aa)) are b. Positions 553–624 (LFAAAGQSVP…IRRMNQLLVS (72 aa)) are c.

This sequence belongs to the heat shock protein 90 family. As to quaternary structure, homodimer.

The protein localises to the cytoplasm. Its function is as follows. Molecular chaperone. Has ATPase activity. The chain is Chaperone protein HtpG from Salmonella typhi.